Reading from the N-terminus, the 485-residue chain is MSSIIQNPIESSYFVEDLSAVGNSQLHSGRSLTYGDRKANIDTRSGGGRRFWSNLNDSGNSFGAVPASSMNLSYGPTKSATISSKDGAMSRSSRYYVSSELKATLPSLDGRRLSKRNAANHASHHRMPDESASYRTRGEYESSSPRVPQKSLRRYYSTRTAQRLDVRRPASRSSRYSKTSDLPPSDPGRFVDDSDLTPHTDFTNRFVDSDFDPDSGVGRSSSPDQMMSRNNNLNINARMTSTSSKPYAKENQQLISSMAPVEQKNSFSTAREQYVAPALSFAEPVETQHNHMPKTTPLRGTSTVMNGSPIGPYSSSSNATGMYGVSKGHSSSTRRPFFSDVGSSQPAEEFVGSSSSHGRQQDSYIADDSDSERSYRRVRDQYLSKPRLSDKNRYSTFSEFPGQGTPSASQSNLRRSNTVRPTSFYYEKLHIKNDNPSFQALPYETTTQERKPVVKPDSIKTVKPEKKKSKGFFKKLMHKISHIFD.

A sufficient for interaction with Skb1 region spans residues 1–200 (MSSIIQNPIE…VDDSDLTPHT (200 aa)). 3 disordered regions span residues 117–230 (NAAN…MSRN), 286–416 (ETQH…LRRS), and 446–466 (TTQE…KPEK). Residues 171–182 (SRSSRYSKTSDL) are compositionally biased toward polar residues. Residues 189–198 (RFVDDSDLTP) show a composition bias toward basic and acidic residues. 2 stretches are compositionally biased toward polar residues: residues 218-230 (GRSS…MSRN) and 341-363 (VGSS…QQDS). Ser222 is modified (phosphoserine). Positions 371–393 (SERSYRRVRDQYLSKPRLSDKNR) are enriched in basic and acidic residues. The segment covering 394-416 (YSTFSEFPGQGTPSASQSNLRRS) has biased composition (polar residues). A compositionally biased stretch (basic and acidic residues) spans 447–464 (TQERKPVVKPDSIKTVKP). The required and sufficient for plasma membrane anchoring; lysine-rich, may bind to anionic lipids in the plasma membrane stretch occupies residues 451 to 485 (KPVVKPDSIKTVKPEKKKSKGFFKKLMHKISHIFD). The residue at position 458 (Ser458) is a Phosphoserine.

Interacts with Skb1.

The protein localises to the cell membrane. Functionally, acts as a membrane anchor for Skb1 in forming plasma membrane microdomains. Promotes mitotic entry by sequestering mitotic inhibitor Skb1 from its regulatory targets Cdr1 and Wee1. This Schizosaccharomyces pombe (strain 972 / ATCC 24843) (Fission yeast) protein is Skb1 localization factor 1.